The chain runs to 22 residues: Caerin-3.3 (22 aa).

Lysine 22 carries the lysine amide modification.

In terms of tissue distribution, expressed by the skin parotoid and/or rostral glands.

It is found in the secreted. Its function is as follows. Antibacterial peptide, that adopts an alpha helical conformation which can disrupt bacterial membranes. Each caerin displays a different antimicrobial specificity. This chain is Caerin-3.3, found in Ranoidea caerulea (Green tree frog).